A 456-amino-acid chain; its full sequence is CBL-interacting protein kinase 9 (456 aa).

One can recognise a Protein kinase domain in the interval 27-282 (YELGKTIGEG…IAQILEDDWF (256 aa)). Residues 33–41 (IGEGSFAKV) and lysine 56 each bind ATP. Residue aspartate 150 is the Proton acceptor of the active site. Positions 168–197 (DFGLSAFAPQTKEDGLLHTACGTPNYVAPE) are activation loop. An NAF domain is found at 318 to 343 (REKPESMNAFALISRSQGFNLGNLFE). Positions 351–380 (KRETSFTSQCTPQEIMSKIEEACGPLGFNV) are PPI.

Belongs to the protein kinase superfamily. CAMK Ser/Thr protein kinase family. SNF1 subfamily. It depends on Mn(2+) as a cofactor.

It carries out the reaction L-seryl-[protein] + ATP = O-phospho-L-seryl-[protein] + ADP + H(+). The enzyme catalyses L-threonyl-[protein] + ATP = O-phospho-L-threonyl-[protein] + ADP + H(+). Its function is as follows. CIPK serine-threonine protein kinases interact with CBL proteins. Binding of a CBL protein to the regulatory NAF domain of CIPK protein lead to the activation of the kinase in a calcium-dependent manner. In Oryza sativa subsp. japonica (Rice), this protein is CBL-interacting protein kinase 9 (CIPK9).